The following is a 273-amino-acid chain: Tryptophan synthase alpha chain (273 aa).

Catalysis depends on proton acceptor residues E49 and D60.

This sequence belongs to the TrpA family. In terms of assembly, tetramer of two alpha and two beta chains.

It carries out the reaction (1S,2R)-1-C-(indol-3-yl)glycerol 3-phosphate + L-serine = D-glyceraldehyde 3-phosphate + L-tryptophan + H2O. Its pathway is amino-acid biosynthesis; L-tryptophan biosynthesis; L-tryptophan from chorismate: step 5/5. Functionally, the alpha subunit is responsible for the aldol cleavage of indoleglycerol phosphate to indole and glyceraldehyde 3-phosphate. This Albidiferax ferrireducens (strain ATCC BAA-621 / DSM 15236 / T118) (Rhodoferax ferrireducens) protein is Tryptophan synthase alpha chain.